Consider the following 267-residue polypeptide: Transcription factor LBX1 (267 aa).

Positions 1–21 are enriched in basic and acidic residues; the sequence is MTSKDEAKSSASSVEERRRNA. Positions 1-36 are disordered; sequence MTSKDEAKSSASSVEERRRNALDLLPPPANSNKPLT. Residues 127-186 constitute a DNA-binding region (homeobox); the sequence is RRKSRTAFTNHQIYELEKRFLYQKYLSPADRDQIAQQLGLTNAQVITWFQNRRAKLKRDL. Residues 211-267 are disordered; that stretch reads SELEESGSERGNSRSRSPQLGLTSNHMPLSPSXPLTDQHASKECSEDEEDVEIDVDD. Residues 228-237 show a composition bias toward polar residues; sequence PQLGLTSNHM. A compositionally biased stretch (acidic residues) spans 255–267; it reads SEDEEDVEIDVDD.

As to expression, expressed in all myoblasts that will populate body wall muscles as well as in a group of cells the migrate into the head.

Its subcellular location is the nucleus. In terms of biological role, transcription factor that controls hypaxial muscle development by down-regulating myod1 and cdkn1b/p27, thereby allowing myoblasts to proliferate before the onset of terminal differentiation. This chain is Transcription factor LBX1, found in Xenopus laevis (African clawed frog).